The primary structure comprises 77 residues: Defensin-like protein 4 (77 aa).

The N-terminal stretch at 1-30 is a signal peptide; sequence MKFSMRLISAVLFLVMIFVATGMGPVTVEA. 4 disulfides stabilise this stretch: Cys-33/Cys-77, Cys-44/Cys-64, Cys-50/Cys-71, and Cys-54/Cys-73.

Belongs to the DEFL family. In terms of tissue distribution, expressed in roots, siliques and seeds.

Its subcellular location is the secreted. In terms of biological role, confers broad-spectrum resistance to pathogens. This Arabidopsis thaliana (Mouse-ear cress) protein is Defensin-like protein 4 (PDF2.1).